Here is a 258-residue protein sequence, read N- to C-terminus: Ribosomal RNA small subunit methyltransferase J (258 aa).

S-adenosyl-L-methionine is bound by residues 123-124 (ER) and aspartate 177. A disordered region spans residues 232–258 (IDGPKPSHSLEGKSSRYDIYPKKALKA). Positions 239-252 (HSLEGKSSRYDIYP) are enriched in basic and acidic residues.

This sequence belongs to the methyltransferase superfamily. RsmJ family.

It is found in the cytoplasm. The catalysed reaction is guanosine(1516) in 16S rRNA + S-adenosyl-L-methionine = N(2)-methylguanosine(1516) in 16S rRNA + S-adenosyl-L-homocysteine + H(+). Its function is as follows. Specifically methylates the guanosine in position 1516 of 16S rRNA. The sequence is that of Ribosomal RNA small subunit methyltransferase J from Pseudomonas putida (strain ATCC 47054 / DSM 6125 / CFBP 8728 / NCIMB 11950 / KT2440).